Here is a 608-residue protein sequence, read N- to C-terminus: Histone-arginine methyltransferase CARM1 (608 aa).

Alanine 2 carries the N-acetylalanine modification. The tract at residues 27–138 (ATVSVFPGAR…GHTLERSVFS (112 aa)) is interaction with C9orf72. The SAM-dependent MTase PRMT-type domain maps to 146–453 (AVQYFQFYGY…KRQSYDISIV (308 aa)). S-adenosyl-L-methionine is bound by residues glutamine 159, arginine 168, glycine 192, and glutamate 214. Serine 216 carries the post-translational modification Phosphoserine. Residue lysine 227 forms a Glycyl lysine isopeptide (Lys-Gly) (interchain with G-Cter in ubiquitin) linkage. The S-adenosyl-L-methionine site is built by glutamate 243 and serine 271. Residues 346 to 379 (RILMAKSVKYTVNFLEAKEGDLHRIEIPFKFHML) form a required for nuclear translocation region. The interval 499–608 (TGSTYNLSSG…IPTNTMHYGS (110 aa)) is transactivation domain. Dimethylated arginine is present on arginine 550.

Belongs to the class I-like SAM-binding methyltransferase superfamily. Protein arginine N-methyltransferase family. Homodimer. Interacts with NR1H4. Interacts with SNRPC. Interacts with the C-terminus of NCOA2/GRIP1, NCO3/ACTR and NCOA1/SRC1. Part of a complex consisting of CARM1, EP300/P300 and NCOA2/GRIP1. Interacts with FLII, TP53, myogenic factor MEF2, EP300/P300, TRIM24, CREBBP and CTNNB1. Interacts with RELA. Identified in a complex containing CARM1, TRIM24 and NCOA2/GRIP1. Interacts with NCOA3/SRC3. Interacts with SKP2. Interacts (via PH domain-like fold) with C9orf72. Interacts with PARP1; promoting PARP1 recruimtent to replication forks. As to quaternary structure, (Microbial infection) Interacts with HTLV-1 protein Tax. In terms of processing, auto-methylated on Arg-550. Methylation enhances transcription coactivator activity. Methylation is required for its role in the regulation of pre-mRNA alternative splicing. Phosphorylation at Ser-216 is strongly increased during mitosis, and decreases rapidly to a very low, basal level after entry into the G1 phase of the cell cycle. Phosphorylation at Ser-216 may promote location in the cytosol. Phosphorylation at Ser-216 interferes with S-adenosyl-L-methionine binding and strongly reduces methyltransferase activity. Post-translationally, ubiquitinated by E3 ubiquitin-protein ligase complex containing FBXO9 at Lys-227; leading to proteasomal degradation. In terms of tissue distribution, overexpressed in prostate adenocarcinomas and high-grade prostatic intraepithelial neoplasia.

It localises to the nucleus. The protein resides in the cytoplasm. The protein localises to the chromosome. It catalyses the reaction L-arginyl-[protein] + 2 S-adenosyl-L-methionine = N(omega),N(omega)-dimethyl-L-arginyl-[protein] + 2 S-adenosyl-L-homocysteine + 2 H(+). Its activity is regulated as follows. Methylation of H3R17 (H3R17me) by CARM1 is stimulated by preacetylation of H3 'Lys-18' (H3K18ac) H3 'Lys-23' (H3K23ac) by EP300 and blocked by citrullination of H3 'Arg-17' (H3R17ci) by PADI4. In terms of biological role, methylates (mono- and asymmetric dimethylation) the guanidino nitrogens of arginyl residues in several proteins involved in DNA packaging, transcription regulation, pre-mRNA splicing, and mRNA stability. Recruited to promoters upon gene activation together with histone acetyltransferases from EP300/P300 and p160 families, methylates histone H3 at 'Arg-17' (H3R17me), forming mainly asymmetric dimethylarginine (H3R17me2a), leading to activation of transcription via chromatin remodeling. During nuclear hormone receptor activation and TCF7L2/TCF4 activation, acts synergically with EP300/P300 and either one of the p160 histone acetyltransferases NCOA1/SRC1, NCOA2/GRIP1 and NCOA3/ACTR or CTNNB1/beta-catenin to activate transcription. During myogenic transcriptional activation, acts together with NCOA3/ACTR as a coactivator for MEF2C. During monocyte inflammatory stimulation, acts together with EP300/P300 as a coactivator for NF-kappa-B. Acts as a coactivator for PPARG, promotes adipocyte differentiation and the accumulation of brown fat tissue. Plays a role in the regulation of pre-mRNA alternative splicing by methylation of splicing factors. Also seems to be involved in p53/TP53 transcriptional activation. Methylates EP300/P300, both at 'Arg-2142', which may loosen its interaction with NCOA2/GRIP1, and at 'Arg-580' and 'Arg-604' in the KIX domain, which impairs its interaction with CREB and inhibits CREB-dependent transcriptional activation. Also methylates arginine residues in RNA-binding proteins PABPC1, ELAVL1 and ELAV4, which may affect their mRNA-stabilizing properties and the half-life of their target mRNAs. Acts as a transcriptional coactivator of ACACA/acetyl-CoA carboxylase by enriching H3R17 methylation at its promoter, thereby positively regulating fatty acid synthesis. Independently of its methyltransferase activity, involved in replication fork progression: promotes PARP1 recruitment to replication forks, leading to poly-ADP-ribosylation of chromatin at replication forks and reduced fork speed. This Homo sapiens (Human) protein is Histone-arginine methyltransferase CARM1 (CARM1).